The primary structure comprises 442 residues: D-serine dehydratase (442 aa).

Lys-118 bears the N6-(pyridoxal phosphate)lysine mark.

Belongs to the serine/threonine dehydratase family. DsdA subfamily. Monomer. Requires pyridoxal 5'-phosphate as cofactor.

The catalysed reaction is D-serine = pyruvate + NH4(+). The polypeptide is D-serine dehydratase (Citrobacter koseri (strain ATCC BAA-895 / CDC 4225-83 / SGSC4696)).